A 264-amino-acid chain; its full sequence is Probable septum site-determining protein MinC (264 aa).

The disordered stretch occupies residues Ser-103–Ala-147. The span at Gly-110–Ala-122 shows a compositional bias: basic and acidic residues. Over residues Asp-124–Ala-147 the composition is skewed to low complexity.

This sequence belongs to the MinC family. In terms of assembly, interacts with MinD and FtsZ.

In terms of biological role, cell division inhibitor that blocks the formation of polar Z ring septums. Rapidly oscillates between the poles of the cell to destabilize FtsZ filaments that have formed before they mature into polar Z rings. Prevents FtsZ polymerization. The sequence is that of Probable septum site-determining protein MinC from Ralstonia pickettii (strain 12J).